The primary structure comprises 106 residues: Minor capsid protein VP2 (106 aa).

It belongs to the vesivirus VP2 protein family. In terms of assembly, homooligomer. The portal-like structure consists in 12 copies of VP2. Interacts with capsid protein VP1.

It localises to the virion. It is found in the host cytoplasm. Minor structural protein that forms a portal-like structure at a unique three-fold axis of symmetry, following binding to the host receptor. The virion attaches to feline junctional adhesion molecule A (F11R). Once attached, the virion is endocytosed. Acidification of the endosome induces conformational change of capsid protein thereby injecting virus genomic RNA into host cytoplasm. The channel formed by VP2 may allow the delivery of the viral genome through the host endosomal membrane. The sequence is that of Minor capsid protein VP2 from Feline calicivirus (strain Japanese F4) (FCV).